Reading from the N-terminus, the 580-residue chain is N(6)-adenosine-methyltransferase catalytic subunit METTL3 (580 aa).

The tract at residues 1–70 (MSDTWSSIQA…PKPSTASAVP (70 aa)) is disordered. Residue serine 2 is modified to N-acetylserine; alternate. Serine 2 carries the phosphoserine; alternate modification. Basic and acidic residues predominate over residues 28-37 (QDSGHLDLRN). A phosphoserine mark is found at serine 43, serine 48, and serine 50. Residues lysine 177, lysine 211, lysine 212, and lysine 215 each participate in a glycyl lysine isopeptide (Lys-Gly) (interchain with G-Cter in SUMO1) cross-link. The segment at 198–219 (LNSSASEPAKEPAKKSRKHAAS) is disordered. Residues 210 to 215 (AKKSRK) carry the Nuclear localization signal motif. Phosphoserine occurs at positions 219 and 243. Phosphothreonine is present on threonine 348. Serine 350 is modified (phosphoserine). S-adenosyl-L-methionine-binding positions include 377 to 378 (DI) and aspartate 395. Residues 396 to 410 (PPWDIHMELPYGTLT) are gate loop 1. Interaction with METTL14 stretches follow at residues 450-454 (ERVDE) and 464-480 (QRII…NHGK). The segment at 462-479 (QLQRIIRTGRTGHWLNHG) is interphase loop. A positively charged region required for RNA-binding region spans residues 465–478 (RIIRTGRTGHWLNH). The interval 507–515 (VRSTSHKPD) is gate loop 2. S-adenosyl-L-methionine-binding positions include lysine 513, 536–539 (RPHN), and 549–550 (NQ).

It belongs to the MT-A70-like family. As to quaternary structure, heterodimer; heterodimerizes with METTL14 to form an antiparallel heterodimer that constitutes an active methyltransferase. Component of the WMM complex, a N6-methyltransferase complex composed of a catalytic subcomplex, named MAC, and of an associated subcomplex, named MACOM. The MAC subcomplex is composed of METTL3 and METTL14. The MACOM subcomplex is composed of WTAP, ZC3H13, CBLL1/HAKAI, VIRMA, and, in some cases of RBM15 (RBM15 or RBM15B). Interacts with NCBP1/CBP80. Interacts with EIF4E. Interacts with EIF3B. In terms of processing, sumoylation inhibits the N6-adenosine-methyltransferase activity. Sumoylation does not affect subcellular location or interaction with METTL14. Desumoylated by SENP1. As to expression, widely expressed at low level. Expressed in spleen, thymus, prostate, testis, ovary, small intestine, colon and peripheral blood leukocytes.

It localises to the nucleus. It is found in the nucleus speckle. The protein localises to the cytoplasm. It catalyses the reaction an adenosine in mRNA + S-adenosyl-L-methionine = an N(6)-methyladenosine in mRNA + S-adenosyl-L-homocysteine + H(+). With respect to regulation, methyltransferase activity is regulated by miRNAs via a sequence pairing mechanism. Methyltransferase activity is inhibited by sumoylation. The METTL3-METTL14 heterodimer forms a N6-methyltransferase complex that methylates adenosine residues at the N(6) position of some RNAs and regulates various processes such as the circadian clock, differentiation of embryonic and hematopoietic stem cells, cortical neurogenesis, response to DNA damage, differentiation of T-cells and primary miRNA processing. In the heterodimer formed with METTL14, METTL3 constitutes the catalytic core. N6-methyladenosine (m6A), which takes place at the 5'-[AG]GAC-3' consensus sites of some mRNAs, plays a role in mRNA stability, processing, translation efficiency and editing. M6A acts as a key regulator of mRNA stability: methylation is completed upon the release of mRNA into the nucleoplasm and promotes mRNA destabilization and degradation. In embryonic stem cells (ESCs), m6A methylation of mRNAs encoding key naive pluripotency-promoting transcripts results in transcript destabilization, promoting differentiation of ESCs. M6A regulates the length of the circadian clock: acts as an early pace-setter in the circadian loop by putting mRNA production on a fast-track for facilitating nuclear processing, thereby providing an early point of control in setting the dynamics of the feedback loop. M6A also regulates circadian regulation of hepatic lipid metabolism. M6A regulates spermatogonial differentiation and meiosis and is essential for male fertility and spermatogenesis. Also required for oogenesis. Involved in the response to DNA damage: in response to ultraviolet irradiation, METTL3 rapidly catalyzes the formation of m6A on poly(A) transcripts at DNA damage sites, leading to the recruitment of POLK to DNA damage sites. M6A is also required for T-cell homeostasis and differentiation: m6A methylation of transcripts of SOCS family members (SOCS1, SOCS3 and CISH) in naive T-cells promotes mRNA destabilization and degradation, promoting T-cell differentiation. Inhibits the type I interferon response by mediating m6A methylation of IFNB. M6A also takes place in other RNA molecules, such as primary miRNA (pri-miRNAs). Mediates m6A methylation of Xist RNA, thereby participating in random X inactivation: m6A methylation of Xist leads to target YTHDC1 reader on Xist and promote transcription repression activity of Xist. M6A also regulates cortical neurogenesis: m6A methylation of transcripts related to transcription factors, neural stem cells, the cell cycle and neuronal differentiation during brain development promotes their destabilization and decay, promoting differentiation of radial glial cells. METTL3 mediates methylation of pri-miRNAs, marking them for recognition and processing by DGCR8. Acts as a positive regulator of mRNA translation independently of the methyltransferase activity: promotes translation by interacting with the translation initiation machinery in the cytoplasm. Its overexpression in a number of cancer cells suggests that it may participate in cancer cell proliferation by promoting mRNA translation. During human coronavirus SARS-CoV-2 infection, adds m6A modifications in SARS-CoV-2 RNA leading to decreased RIGI binding and subsequently dampening the sensing and activation of innate immune responses. This Homo sapiens (Human) protein is N(6)-adenosine-methyltransferase catalytic subunit METTL3.